The sequence spans 651 residues: Acetyl-coenzyme A synthetase (651 aa).

CoA contacts are provided by residues 189-192, T311, and N335; that span reads RGGK. Residues 387–389, 411–416, D500, and R515 each bind ATP; these read GEP and DTWWQT. Residue S523 coordinates CoA. Position 526 (R526) interacts with ATP. Mg(2+) is bound by residues V537, H539, and V542. R584 serves as a coordination point for CoA. K609 is subject to N6-acetyllysine.

Belongs to the ATP-dependent AMP-binding enzyme family. Mg(2+) serves as cofactor. Post-translationally, acetylated. Deacetylation by the SIR2-homolog deacetylase activates the enzyme.

It catalyses the reaction acetate + ATP + CoA = acetyl-CoA + AMP + diphosphate. In terms of biological role, catalyzes the conversion of acetate into acetyl-CoA (AcCoA), an essential intermediate at the junction of anabolic and catabolic pathways. AcsA undergoes a two-step reaction. In the first half reaction, AcsA combines acetate with ATP to form acetyl-adenylate (AcAMP) intermediate. In the second half reaction, it can then transfer the acetyl group from AcAMP to the sulfhydryl group of CoA, forming the product AcCoA. The chain is Acetyl-coenzyme A synthetase from Allorhizobium ampelinum (strain ATCC BAA-846 / DSM 112012 / S4) (Agrobacterium vitis (strain S4)).